A 329-amino-acid polypeptide reads, in one-letter code: DNA-directed RNA polymerase subunit alpha (329 aa).

The interval 1-234 (MQGSVTEFLK…EQLDAFVELR (234 aa)) is alpha N-terminal domain (alpha-NTD). The alpha C-terminal domain (alpha-CTD) stretch occupies residues 248–329 (FDPILLRPVD…WPPASLADDL (82 aa)).

Belongs to the RNA polymerase alpha chain family. In terms of assembly, homodimer. The RNAP catalytic core consists of 2 alpha, 1 beta, 1 beta' and 1 omega subunit. When a sigma factor is associated with the core the holoenzyme is formed, which can initiate transcription.

The enzyme catalyses RNA(n) + a ribonucleoside 5'-triphosphate = RNA(n+1) + diphosphate. In terms of biological role, DNA-dependent RNA polymerase catalyzes the transcription of DNA into RNA using the four ribonucleoside triphosphates as substrates. This is DNA-directed RNA polymerase subunit alpha from Shewanella baltica (strain OS155 / ATCC BAA-1091).